We begin with the raw amino-acid sequence, 637 residues long: Biosynthetic arginine decarboxylase (637 aa).

An N6-(pyridoxal phosphate)lysine modification is found at Lys-101. Substrate is bound at residue 286–296 (FDVGGGLAVDY).

Belongs to the Orn/Lys/Arg decarboxylase class-II family. SpeA subfamily. It depends on Mg(2+) as a cofactor. The cofactor is pyridoxal 5'-phosphate.

It catalyses the reaction L-arginine + H(+) = agmatine + CO2. It participates in amine and polyamine biosynthesis; agmatine biosynthesis; agmatine from L-arginine: step 1/1. Functionally, catalyzes the biosynthesis of agmatine from arginine. In Shewanella woodyi (strain ATCC 51908 / MS32), this protein is Biosynthetic arginine decarboxylase.